Reading from the N-terminus, the 126-residue chain is MARIAGVDLPRDKRIEIGLTYIYGIGLTRSQEILAATGVNPDTRVRELGDQDVAALRNAVAGYQVEGDLRRWESMNVKRLMDIGSYRGRRHRAGLPVRGQRTRTNSRTRRSAKRTVAGKKKAPSKK.

The disordered stretch occupies residues 91–126 (HRAGLPVRGQRTRTNSRTRRSAKRTVAGKKKAPSKK). The span at 100 to 126 (QRTRTNSRTRRSAKRTVAGKKKAPSKK) shows a compositional bias: basic residues.

It belongs to the universal ribosomal protein uS13 family. In terms of assembly, part of the 30S ribosomal subunit. Forms a loose heterodimer with protein S19. Forms two bridges to the 50S subunit in the 70S ribosome.

Its function is as follows. Located at the top of the head of the 30S subunit, it contacts several helices of the 16S rRNA. In the 70S ribosome it contacts the 23S rRNA (bridge B1a) and protein L5 of the 50S subunit (bridge B1b), connecting the 2 subunits; these bridges are implicated in subunit movement. Contacts the tRNAs in the A and P-sites. The polypeptide is Small ribosomal subunit protein uS13 (Acaryochloris marina (strain MBIC 11017)).